The primary structure comprises 1392 residues: MEVLMAERANLVFHNKAIDGTAMKRLISRLIDHFGMAYTSHILDQVKTLGFQQATATSISLGIDDLLTIPSKGWLVQDAEQQSLILEKHHHYGNVHAVEKLRQSIEIWYATSEYLRQEMNPNFRMTDPFNPVHIMSFSGARGNASQVHQLVGMRGLMSDPQGQMIDLPIQSNLREGLSLTEYIISCYGARKGVVDTAVRTSDAGYLTRRLVEVVQHIVVRRTDCGTARGISVSPRNGMMPERFFIQTLIGRVLADDIYMGPRCIATRNQDIGIGLVNRFITFRAQPISIRTPFTCRSTSWICRLCYGRSPTHGDLVELGEAVGIIAGQSIGEPGTQLTLRTFHTGGVFTGGTAEHVRAPSNGKIKFNEDLVHPTRTRHGHPAFLCSIDLYVTIESEDILHNVNIPPKSLLLVQNDQYVESEQVIAEIRAGISTLNFKEKVRKHIYSDSDGEMHWSTDVYHAPEFTYGNVHLLPKTSHLWILLGGPCRSSLVYLSIHKDQDQMNAHFLSGKRRYTSNLSVTNDQARQKLFSSDFSVKKEDRIPDYSDLNRIICAGQYNLVYSPILHENSDLLSKRRRNKFIIPLHSIQELENELMPCSGISIEIPVNGIFRRNSILAYFDDPRYRRKSSGIIKYGTVETHSVIKKEDLLEYRGVKEFSPKYQMKVDLFFFIPEEVHILPGSSSIMVRNNSIVGVDTQITLNLRSRVGGLVRVERKKKQIELKIFSGDIHFPGETDKISRHTGVLIPPGTGKRNSKESKKVKNWIYVQRITPSKKRFFVLVRPVVTYEITDGINLATLFPPDPLQERDNVQLRIVNYILYGNGKPIRGISDTSIQLVRTCLVLNWNQDKKSSSCEEARASFVEIRTNGLIRHFLRINLVKSPISYIGKRNDPSGSGLLSDNGSDCTNINPFSSIYSYSKAKIQQSLNQPQGTIHTLLNRNKECQSLIILSAANCSRMGPFKDVKYHSVIKESIKKDPLIPIRNSLGPLGTSLPIENFYSSYHLITHNQILVTNYLQLDNLKQTFQVIKFHYYLMDENGKIFNPDPCRNIILNPFNLNWYFLHHNYCEETSKIISLGQFICENVCIAKNGPPLKSGQVILVQVDSIVIRSAKPYLATPGATVHGHYGETLYEGDTLVTFIYEKSRSGDITQGLPKVEQVLEVRSIDSISMNLEKRIEGWNKCITRILGIPWGFLIGAELTIAQSRISLVNKIQQVYRSQGVQIHNRHIEIIVRQITSKVLVSEDGMSNVFSPGELIGLLRAERMGRALEEAICYRVVLLGITRASLNTQSFISEASFQETARVLAKAALRGRIDWLKGLKENVVLGGVIPVGTGFKGLVHPSKQHNNIPLETKKKNLFEGEMRDILFHHRKLFDSCLSKNFHDIPEQSFIGFNDS.

Cysteine 224, cysteine 295, cysteine 302, and cysteine 305 together coordinate Zn(2+).

It belongs to the RNA polymerase beta' chain family. RpoC2 subfamily. As to quaternary structure, in plastids the minimal PEP RNA polymerase catalytic core is composed of four subunits: alpha, beta, beta', and beta''. When a (nuclear-encoded) sigma factor is associated with the core the holoenzyme is formed, which can initiate transcription. It depends on Zn(2+) as a cofactor.

It is found in the plastid. It localises to the chloroplast. It carries out the reaction RNA(n) + a ribonucleoside 5'-triphosphate = RNA(n+1) + diphosphate. In terms of biological role, DNA-dependent RNA polymerase catalyzes the transcription of DNA into RNA using the four ribonucleoside triphosphates as substrates. The protein is DNA-directed RNA polymerase subunit beta'' of Nicotiana tomentosiformis (Tobacco).